The primary structure comprises 429 residues: Enolase (429 aa).

Gln-167 provides a ligand contact to (2R)-2-phosphoglycerate. The Proton donor role is filled by Glu-209. Mg(2+)-binding residues include Asp-246, Glu-289, and Asp-316. Residues Lys-341, Arg-370, Ser-371, and Lys-392 each contribute to the (2R)-2-phosphoglycerate site. Lys-341 acts as the Proton acceptor in catalysis.

The protein belongs to the enolase family. Component of the RNA degradosome, a multiprotein complex involved in RNA processing and mRNA degradation. Requires Mg(2+) as cofactor.

It localises to the cytoplasm. The protein resides in the secreted. It is found in the cell surface. The enzyme catalyses (2R)-2-phosphoglycerate = phosphoenolpyruvate + H2O. It functions in the pathway carbohydrate degradation; glycolysis; pyruvate from D-glyceraldehyde 3-phosphate: step 4/5. Its function is as follows. Catalyzes the reversible conversion of 2-phosphoglycerate (2-PG) into phosphoenolpyruvate (PEP). It is essential for the degradation of carbohydrates via glycolysis. The polypeptide is Enolase (Pseudomonas putida (strain ATCC 47054 / DSM 6125 / CFBP 8728 / NCIMB 11950 / KT2440)).